A 379-amino-acid chain; its full sequence is Succinyl-diaminopimelate desuccinylase (379 aa).

His-70 contributes to the Zn(2+) binding site. The active site involves Asp-72. Asp-103 provides a ligand contact to Zn(2+). The active-site Proton acceptor is the Glu-137. Glu-138, Glu-166, and His-352 together coordinate Zn(2+).

It belongs to the peptidase M20A family. DapE subfamily. In terms of assembly, homodimer. Zn(2+) serves as cofactor. Requires Co(2+) as cofactor.

The enzyme catalyses N-succinyl-(2S,6S)-2,6-diaminopimelate + H2O = (2S,6S)-2,6-diaminopimelate + succinate. It functions in the pathway amino-acid biosynthesis; L-lysine biosynthesis via DAP pathway; LL-2,6-diaminopimelate from (S)-tetrahydrodipicolinate (succinylase route): step 3/3. Catalyzes the hydrolysis of N-succinyl-L,L-diaminopimelic acid (SDAP), forming succinate and LL-2,6-diaminopimelate (DAP), an intermediate involved in the bacterial biosynthesis of lysine and meso-diaminopimelic acid, an essential component of bacterial cell walls. This Paraburkholderia xenovorans (strain LB400) protein is Succinyl-diaminopimelate desuccinylase.